The chain runs to 122 residues: Large ribosomal subunit protein uL14c (122 aa).

This sequence belongs to the universal ribosomal protein uL14 family. In terms of assembly, part of the 50S ribosomal subunit.

It localises to the plastid. Its subcellular location is the chloroplast. Its function is as follows. Binds to 23S rRNA. The sequence is that of Large ribosomal subunit protein uL14c from Lemna minor (Common duckweed).